Reading from the N-terminus, the 146-residue chain is Single-stranded DNA-binding protein, mitochondrial (146 aa).

The transit peptide at 1–22 directs the protein to the mitochondrion; the sequence is MQHTRRMLNPLLTGLRNLPARG. One can recognise an SSB domain in the interval 38–142; that stretch reads VNTVTILGRV…IIADDVLFFR (105 aa).

As to quaternary structure, homotetramer. As to expression, uniformly distributed in the early embryo. High levels detected in the anterior and posterior midgut primordia of stage 12 embryos. In larvae, high levels were detected in proliferating tissues including the CNS and digestive tract. In adults, highly expressed in the CNS, digestive tract and ovary.

It is found in the mitochondrion. In terms of biological role, binds preferentially and cooperatively to pyrimidine rich single-stranded DNA (ss-DNA). Required to maintain the copy number of mitochondrial DNA (mtDNA) and plays crucial roles during mtDNA replication that stimulate activity of the gamma complex polymerase PolG1/tam at the replication fork. Promotes PolG1 activity largely by organizing the template DNA and eliminating secondary structures to favor ss-DNA conformations that facilitate PolG1 activity. This Drosophila melanogaster (Fruit fly) protein is Single-stranded DNA-binding protein, mitochondrial (mtSSB).